A 57-amino-acid polypeptide reads, in one-letter code: uncharacterized protein (57 aa).

The chain crosses the membrane as a helical span at residues 34–54 (AALLDAAALVVIPGLLTAAAV).

It is found in the membrane. This is an uncharacterized protein from Dictyostelium discoideum (Social amoeba).